A 101-amino-acid chain; its full sequence is Small ribosomal subunit protein uS10 (101 aa).

Belongs to the universal ribosomal protein uS10 family. In terms of assembly, part of the 30S ribosomal subunit.

In terms of biological role, involved in the binding of tRNA to the ribosomes. The chain is Small ribosomal subunit protein uS10 from Anaeromyxobacter dehalogenans (strain 2CP-C).